The sequence spans 415 residues: Nacrein-like protein C2 (415 aa).

N-linked (GlcNAc...) asparagine glycosylation occurs at N27. The Alpha-carbonic anhydrase domain occupies 33–414 (AGFSYDRSIC…KNKVTVYKSF (382 aa)). Zn(2+) is bound by residues H132, H134, and H157. A disordered region spans residues 201–297 (DEPDDEECKH…GENGHKHGCR (97 aa)). The span at 207–219 (ECKHILKGHHPDN) shows a compositional bias: basic and acidic residues. Residues 220 to 289 (NENGNGDNGN…NNGENGNNGE (70 aa)) show a composition bias toward low complexity. A run of 22 repeats spans residues 225-227 (GDN), 228-230 (GNN), 231-233 (GYN), 234-236 (GDN), 237-239 (GNN), 240-242 (GDN), 243-245 (GNN), 246-248 (GYN), 249-251 (GDN), 252-254 (GNN), 255-257 (GVN), 258-260 (GNN), 261-263 (GYN), 264-266 (GDN), 267-269 (GNN), 270-272 (GDN), 273-275 (GNN), 276-278 (GEN), 279-281 (GNN), 282-284 (GEN), 285-286 (GN), and 288-290 (GEN). The 27 X 3 AA approximate tandem repeats of G-X-N stretch occupies residues 225 to 290 (GDNGNNGYNG…NGENGNNGEN (66 aa)). 355–356 (TT) provides a ligand contact to substrate.

It belongs to the alpha-carbonic anhydrase family. As to quaternary structure, homooligomer; disulfide-linked. May also be disulfide-linked to insoluble organic matrix. It depends on Zn(2+) as a cofactor. Expressed in the mantle.

It localises to the secreted. It is found in the extracellular space. The protein resides in the extracellular matrix. It catalyses the reaction hydrogencarbonate + H(+) = CO2 + H2O. Functionally, acts as a negative regulator for calcification in the shells of mollusks. May function both as a calcium concentrator and as a carbonic anhydrase required for production of carbonate ions, which are assembled to CaCO(3) at mineralization sites. Is important for shell formation in both the calcitic prismatic layer and the aragonitic nacreous layer. Shows inhibitory activity of crystal formation when present in free state but, when attached to the insoluble matrix, may regulate the form and size of aragonite crystal. This is Nacrein-like protein C2 from Crassostrea nippona (Iwagaki oyster).